Reading from the N-terminus, the 310-residue chain is Homoserine O-acetyltransferase (310 aa).

C142 (acyl-thioester intermediate) is an active-site residue. Substrate contacts are provided by K163 and S192. The active-site Proton acceptor is H235. E237 is an active-site residue. R249 is a binding site for substrate.

The protein belongs to the MetA family.

The protein resides in the cytoplasm. The enzyme catalyses L-homoserine + acetyl-CoA = O-acetyl-L-homoserine + CoA. Its pathway is amino-acid biosynthesis; L-methionine biosynthesis via de novo pathway; O-acetyl-L-homoserine from L-homoserine: step 1/1. Functionally, transfers an acetyl group from acetyl-CoA to L-homoserine, forming acetyl-L-homoserine. The polypeptide is Homoserine O-acetyltransferase (Agathobacter rectalis (strain ATCC 33656 / DSM 3377 / JCM 17463 / KCTC 5835 / VPI 0990) (Eubacterium rectale)).